The sequence spans 335 residues: Tetraacyldisaccharide 4'-kinase (335 aa).

Position 58–65 (58–65 (TAGGSGKT)) interacts with ATP.

Belongs to the LpxK family.

It carries out the reaction a lipid A disaccharide + ATP = a lipid IVA + ADP + H(+). The protein operates within glycolipid biosynthesis; lipid IV(A) biosynthesis; lipid IV(A) from (3R)-3-hydroxytetradecanoyl-[acyl-carrier-protein] and UDP-N-acetyl-alpha-D-glucosamine: step 6/6. In terms of biological role, transfers the gamma-phosphate of ATP to the 4'-position of a tetraacyldisaccharide 1-phosphate intermediate (termed DS-1-P) to form tetraacyldisaccharide 1,4'-bis-phosphate (lipid IVA). The sequence is that of Tetraacyldisaccharide 4'-kinase from Shewanella frigidimarina (strain NCIMB 400).